The chain runs to 469 residues: MVGFMIALSVSSGYLLDNNYSEYSYYILDNDEDFLVFVICDEPNTLKCGFRISEIFSRVFCNAVYNNRYITNLKNLIEVGIYEALENMDKFLKQKGLDYNDLNVSIAGGVYRNGKLMLFSLGNSPVFVVDKDYYLYCPFDLNKNYNLKDWKKFIKFSEVIENPKSVVACSNKLDGKVFKFKNENNKLIAEPFKYRIIQLINSIISNRENIDKIKEELKTDLNLKDNTPLFVASFDEKPINDELVKVGKPKLKVRGCTPILSKKKEETSPHIEPKIIKNMVLAFILILILIFGLFVMLSHNNLNGGNNSDIVNNSSYQVNTSKISIITVNNENKSTNISLNPIQTVKTVSSLNNLDLNNTITKSKNKDSLKILVKFQVGEISKDIKKLPISIMFPEQGYYYISIKSENSNLKLIDVENGEVVYKNTTLIELFEKIDGKEKTYNLIVEYNGSEIPSEKGINISIFEIKIIK.

This is an uncharacterized protein from Methanocaldococcus jannaschii (strain ATCC 43067 / DSM 2661 / JAL-1 / JCM 10045 / NBRC 100440) (Methanococcus jannaschii).